We begin with the raw amino-acid sequence, 567 residues long: Potassium-transporting ATPase potassium-binding subunit (567 aa).

Transmembrane regions (helical) follow at residues 5–25 (GWIQILVFCGIIGLLTKPLGF), 64–84 (TAYAVALLLFNLAGFLVLYAL), 136–156 (GLTVQNFVSAATGIAIAIALI), 179–199 (LYVLLPLCIVLTLVYVWLGIP), 254–274 (ISNLIQMVTIFALGAALTNVF), 285–305 (WAILASMGALFIAGVAVCYWA), 330–350 (FGIALSALFAVITTAASCGAV), 357–376 (FTALGGMIPLINMQLGEVIV), 421–441 (MLAILCLPLAMLIFTAIAVVL), 486–506 (ITIGIGMLMGRFLVIIPALAI), and 529–549 (LFVGLLIGVIVIVGGLTFFPA).

This sequence belongs to the KdpA family. As to quaternary structure, the system is composed of three essential subunits: KdpA, KdpB and KdpC.

It localises to the cell inner membrane. Its function is as follows. Part of the high-affinity ATP-driven potassium transport (or Kdp) system, which catalyzes the hydrolysis of ATP coupled with the electrogenic transport of potassium into the cytoplasm. This subunit binds the periplasmic potassium ions and delivers the ions to the membrane domain of KdpB through an intramembrane tunnel. The protein is Potassium-transporting ATPase potassium-binding subunit of Mesorhizobium japonicum (strain LMG 29417 / CECT 9101 / MAFF 303099) (Mesorhizobium loti (strain MAFF 303099)).